Here is a 150-residue protein sequence, read N- to C-terminus: UPF0178 protein Maqu_2186 (150 aa).

This sequence belongs to the UPF0178 family.

The protein is UPF0178 protein Maqu_2186 of Marinobacter nauticus (strain ATCC 700491 / DSM 11845 / VT8) (Marinobacter aquaeolei).